We begin with the raw amino-acid sequence, 165 residues long: Small ribosomal subunit protein eS10 (165 aa).

The segment at 92 to 165 (ATLRRSRPET…FGRGRGQAPQ (74 aa)) is disordered. Positions 97–128 (SRPETGRPRPKGLEGERPPRLPRGETDRDTYR) are enriched in basic and acidic residues. A compositionally biased stretch (low complexity) spans 142 to 153 (AGAGAATEFQFR). Gly residues predominate over residues 154–165 (GGFGRGRGQAPQ).

The protein belongs to the eukaryotic ribosomal protein eS10 family. Component of the small ribosomal subunit.

It localises to the cytoplasm. It is found in the nucleus. The protein localises to the nucleolus. Its function is as follows. Component of the 40S ribosomal subunit. The ribosome is a large ribonucleoprotein complex responsible for the synthesis of proteins in the cell. The protein is Small ribosomal subunit protein eS10 (rps10) of Xenopus laevis (African clawed frog).